We begin with the raw amino-acid sequence, 678 residues long: DNA gyrase subunit B (678 aa).

The Toprim domain occupies 456–570 (SELYVVEGDS…HGYVFLAQPP (115 aa)). Mg(2+)-binding residues include E462, D535, and D537.

It belongs to the type II topoisomerase GyrB family. In terms of assembly, heterotetramer, composed of two GyrA and two GyrB chains. In the heterotetramer, GyrA contains the active site tyrosine that forms a transient covalent intermediate with the DNA, while GyrB binds cofactors catalyzes ATP hydrolysis. The cofactor is Mg(2+). It depends on Mn(2+) as a cofactor. Ca(2+) is required as a cofactor.

The protein resides in the cytoplasm. It carries out the reaction ATP-dependent breakage, passage and rejoining of double-stranded DNA.. DNA supercoiling is inhibited by fluoroquinolones; IC(50) 1 ug/ml for sitafloxacin. In terms of biological role, a type II topoisomerase that negatively supercoils closed circular double-stranded (ds) DNA in an ATP-dependent manner to modulate DNA topology and maintain chromosomes in an underwound state. Negative supercoiling favors strand separation, and DNA replication, transcription, recombination and repair, all of which involve strand separation. Also able to catalyze the interconversion of other topological isomers of dsDNA rings, including catenanes and knotted rings. Type II topoisomerases break and join 2 DNA strands simultaneously in an ATP-dependent manner. This Mycobacterium leprae (strain TN) protein is DNA gyrase subunit B.